We begin with the raw amino-acid sequence, 376 residues long: Chaperone protein DnaJ (376 aa).

The region spanning 4–68 (DYYQLLGVAR…ETRARYDQFG (65 aa)) is the J domain. Residues 135-217 (GGEKEIRVTH…CGGAGRLRRP (83 aa)) form a CR-type zinc finger. Positions 148, 151, 165, 168, 191, 194, 205, and 208 each coordinate Zn(2+). 4 CXXCXGXG motif repeats span residues 148 to 155 (CGTCQGSG), 165 to 172 (CTTCGGAG), 191 to 198 (CPTCEGSG), and 205 to 212 (CDDCGGAG).

Belongs to the DnaJ family. Homodimer. The cofactor is Zn(2+).

The protein resides in the cytoplasm. Participates actively in the response to hyperosmotic and heat shock by preventing the aggregation of stress-denatured proteins and by disaggregating proteins, also in an autonomous, DnaK-independent fashion. Unfolded proteins bind initially to DnaJ; upon interaction with the DnaJ-bound protein, DnaK hydrolyzes its bound ATP, resulting in the formation of a stable complex. GrpE releases ADP from DnaK; ATP binding to DnaK triggers the release of the substrate protein, thus completing the reaction cycle. Several rounds of ATP-dependent interactions between DnaJ, DnaK and GrpE are required for fully efficient folding. Also involved, together with DnaK and GrpE, in the DNA replication of plasmids through activation of initiation proteins. The protein is Chaperone protein DnaJ of Synechococcus sp. (strain ATCC 27144 / PCC 6301 / SAUG 1402/1) (Anacystis nidulans).